The sequence spans 677 residues: Transmembrane and coiled-coil domain-containing protein 3 (677 aa).

Residues 1 to 22 (MKVLGRSFFWVLFPVLPWAVQA) form the signal peptide. Residues 124–204 (DYKDVVNMKE…EEEIEEHAFD (81 aa)) are a coiled coil. 2 N-linked (GlcNAc...) asparagine glycosylation sites follow: asparagine 206 and asparagine 230. The next 10 helical transmembrane spans lie at 286–306 (WLCT…GVLL), 317–337 (IVQV…LVGL), 350–370 (ISLQ…LLWG), 416–436 (VLLG…AVMP), 456–476 (ILVL…LCLV), 498–518 (EILI…TELL), 554–574 (FLAI…FVAY), 578–598 (VLVF…ALVL), 608–628 (YIKW…FVLG), and 640–660 (EVYL…PVLW).

Belongs to the monovalent cation:proton antiporter 2 (CPA2) transporter (TC 2.A.37) family. As to expression, expressed in the cornea, lens capsule and choroid-retinal pigment epithelium (at protein level).

It localises to the membrane. Its function is as follows. Probable Na(+)/H(+) antiporter. This is Transmembrane and coiled-coil domain-containing protein 3 (TMCO3) from Homo sapiens (Human).